The chain runs to 628 residues: Neutral/alkaline invertase 1, mitochondrial (628 aa).

Residues 1–35 (MAAAAISHLRRGAPRHARALLYLSTRRFSSSSAAG) constitute a mitochondrion transit peptide. Residues 79 to 90 (ASSAPPLESPPI) are compositionally biased toward low complexity. The disordered stretch occupies residues 79–113 (ASSAPPLESPPIEELPDDATPPPEEEPGLPAPEKD).

This sequence belongs to the glycosyl hydrolase 100 family. As to expression, expressed in roots, leaf and stems.

It localises to the mitochondrion. It carries out the reaction Hydrolysis of terminal non-reducing beta-D-fructofuranoside residues in beta-D-fructofuranosides.. Its function is as follows. Mitochondrial invertase that cleaves sucrose into glucose and fructose. This Oryza sativa subsp. japonica (Rice) protein is Neutral/alkaline invertase 1, mitochondrial.